We begin with the raw amino-acid sequence, 777 residues long: Zinc finger FYVE domain-containing protein 1 (777 aa).

The required for localization in the lipid droplets stretch occupies residues 416–777; it reads MAHSSFFPDE…FNCNKKPGDL (362 aa). 2 FYVE-type zinc fingers span residues 598-659 and 715-775; these read NSQI…EARN and DHEI…KKPG. Positions 604, 607, 620, 623, 628, 631, 651, 654, 721, 724, 737, 740, 745, 748, 767, and 770 each coordinate Zn(2+).

In terms of assembly, interacts with RAB18 (in GTP-bound form). Interacts with BSCL2 in a RAB18-dependent manner. Interacts with ZW10. (Microbial infection) Interacts with SARS coronavirus-2/SARS-CoV-2 non-structural protein 6 (nsp6); the interaction is independent of PtdIns3P-binding and leads to endoplasmic reticulum (ER) and double membrane vesicles (DMVs) binding to lipid droplets. Highly expressed in heart. Also detected in the testis. As to expression, expressed in all tissues examined, including, brain, placenta, lung, liver, skeletal muscle, pancreas and kidney. Highly expressed in heart.

The protein resides in the golgi apparatus. Its subcellular location is the golgi stack. It is found in the endoplasmic reticulum. The protein localises to the lipid droplet. It localises to the preautophagosomal structure. The protein resides in the mitochondrion. In terms of biological role, plays a role in the formation of lipid droplets (LDs) which are storage organelles at the center of lipid and energy homeostasis. Regulates the morphology, size and distribution of LDs. Mediates the formation of endoplasmic reticulum-lipid droplets (ER-LD) contacts by forming a complex with RAB18 and ZW10. Binds to phosphatidylinositol 3-phosphate (PtdIns3P) through FYVE-type zinc finger. Its function is as follows. (Microbial infection) Upon SARS coronavirus-2/SARS-CoV-2 infection, mediates through binding with non-structural protein 6 (nsp6) the replication organelle-lipid droplet association required to sustain viral replication. The polypeptide is Zinc finger FYVE domain-containing protein 1 (ZFYVE1) (Homo sapiens (Human)).